The primary structure comprises 178 residues: MRRPFRATPVQKDGPRSNRDIRVPRVQLIDAEGQNHGDVSIQEAIAMAEEAGLDLVEIVPNAEPPVCKIVDLGKLKYQNQKKAAEARKKQKTVEIKEIKMRPNIDTHDYEVKMKAALRFFEEGDKVKVTLRFRGREMAHQELGMKLLQRVKEDTVEIAKVESEPKLEGRQMMMVLAPR.

The disordered stretch occupies residues 1–20 (MRRPFRATPVQKDGPRSNRD).

It belongs to the IF-3 family. Monomer.

It localises to the cytoplasm. IF-3 binds to the 30S ribosomal subunit and shifts the equilibrium between 70S ribosomes and their 50S and 30S subunits in favor of the free subunits, thus enhancing the availability of 30S subunits on which protein synthesis initiation begins. In Brucella anthropi (strain ATCC 49188 / DSM 6882 / CCUG 24695 / JCM 21032 / LMG 3331 / NBRC 15819 / NCTC 12168 / Alc 37) (Ochrobactrum anthropi), this protein is Translation initiation factor IF-3.